Here is a 311-residue protein sequence, read N- to C-terminus: Pyrimidine-specific ribonucleoside hydrolase RihA (311 aa).

Histidine 240 is a catalytic residue.

Belongs to the IUNH family. RihA subfamily.

Functionally, hydrolyzes cytidine or uridine to ribose and cytosine or uracil, respectively. The chain is Pyrimidine-specific ribonucleoside hydrolase RihA from Salmonella agona (strain SL483).